A 446-amino-acid polypeptide reads, in one-letter code: tRNA modification GTPase MnmE (446 aa).

(6S)-5-formyl-5,6,7,8-tetrahydrofolate-binding residues include Arg-28, Glu-85, and Lys-124. The 153-residue stretch at 220-372 (GLTVVLVGQP…LRAKLLQAAG (153 aa)) folds into the TrmE-type G domain. Asn-230 is a K(+) binding site. Residues 230–235 (NVGKSS), 249–255 (TEIAGTT), and 274–277 (DTAG) each bind GTP. Mg(2+) is bound at residue Ser-234. Residues Thr-249, Ile-251, and Thr-254 each contribute to the K(+) site. Thr-255 is a Mg(2+) binding site. Lys-446 contributes to the (6S)-5-formyl-5,6,7,8-tetrahydrofolate binding site.

Belongs to the TRAFAC class TrmE-Era-EngA-EngB-Septin-like GTPase superfamily. TrmE GTPase family. In terms of assembly, homodimer. Heterotetramer of two MnmE and two MnmG subunits. The cofactor is K(+).

It localises to the cytoplasm. Exhibits a very high intrinsic GTPase hydrolysis rate. Involved in the addition of a carboxymethylaminomethyl (cmnm) group at the wobble position (U34) of certain tRNAs, forming tRNA-cmnm(5)s(2)U34. This Thiobacillus denitrificans (strain ATCC 25259 / T1) protein is tRNA modification GTPase MnmE.